The sequence spans 304 residues: Phosphonates import ATP-binding protein PhnC 1 (304 aa).

Positions 4–240 constitute an ABC transporter domain; it reads VSLQNVTKLF…VIDDLYYAGS (237 aa). 37 to 44 is an ATP binding site; sequence GPSGAGKS. The segment at 240–304 is disordered; it reads SESTPVSHGD…TETDTGEAQL (65 aa). Polar residues predominate over residues 263 to 272; the sequence is TSVSSDMETT. Residues 289-304 are compositionally biased toward acidic residues; it reads TDTETDTETDTGEAQL.

This sequence belongs to the ABC transporter superfamily. Phosphonates importer (TC 3.A.1.9.1) family. The complex is composed of two ATP-binding proteins (PhnC), two transmembrane proteins (PhnE) and a solute-binding protein (PhnD).

It localises to the cell membrane. It catalyses the reaction phosphonate(out) + ATP + H2O = phosphonate(in) + ADP + phosphate + H(+). Functionally, part of the ABC transporter complex PhnCDE involved in phosphonates import. Responsible for energy coupling to the transport system. This Haloquadratum walsbyi (strain DSM 16790 / HBSQ001) protein is Phosphonates import ATP-binding protein PhnC 1.